Consider the following 157-residue polypeptide: Peptide methionine sulfoxide reductase MsrB (157 aa).

Residues 14–137 (DNDLRERLTP…NSAALRFVPL (124 aa)) enclose the MsrB domain. The Nucleophile role is filled by Cys126.

The protein belongs to the MsrB Met sulfoxide reductase family.

The catalysed reaction is L-methionyl-[protein] + [thioredoxin]-disulfide + H2O = L-methionyl-(R)-S-oxide-[protein] + [thioredoxin]-dithiol. In Deinococcus radiodurans (strain ATCC 13939 / DSM 20539 / JCM 16871 / CCUG 27074 / LMG 4051 / NBRC 15346 / NCIMB 9279 / VKM B-1422 / R1), this protein is Peptide methionine sulfoxide reductase MsrB.